The chain runs to 491 residues: MTYAESTRSAVVYSSIVPPPRTPVGPPMLKDGVRKGSASQPLQPKNGANSLDYWSKSEDEKSGITCYYSRHNIQFPPPQRKMKPVKPNPVGRSTINGFTPSTSSPQNGLRYPPFPQNTPESVMSPPVGIYRNIPAMPRAKLTKDEKNGGKMNRDGGGENPKNVVWGGTSRKDDDTASTPLNSFSANASIEKKRSTARRKPRWARCFQTLFCCVTPPREIEKIQSSQRTNSTNNNHQNGRPSTPTNTGPPIQLITQVHRDGTVTGLPTTGQACQQNGSGDGVTPYDKIANDSVGTINEKPLLPPLLPQDSNKKCLVIDLDETLVHSSFKPVKNPDFVIPVEIDGVEHQVYVLKRPYVDEFLAKVGEHFECILFTASLAKYADPVADLLDKKRVFRGRLFREACVFHKGNYVKDLSRLGRNLNQTLIIDNSPASYAFHPENAVPVTTWFDDPSDTELLDILPSLEHLNGFSSIYDLYRPEEGPQSELLNHCSC.

Disordered regions lie at residues M1 to Y53, K140 to R198, K221 to P249, and T261 to T282. The segment covering V17–P26 has biased composition (pro residues). Residues S37–N49 are compositionally biased toward polar residues. Basic and acidic residues predominate over residues L141–G156. Residues A176–A187 show a composition bias toward polar residues. The segment covering Q223–N237 has biased composition (low complexity). 2 stretches are compositionally biased toward polar residues: residues G238 to P249 and G264 to G276. An FCP1 homology domain is found at Q307–L465. The active-site 4-aspartylphosphate intermediate is D317. Mg(2+)-binding residues include D317, D319, and N428. D319 serves as the catalytic Proton donor.

May interact (via phosphatase domain) with cpna-1. Isoform a and isoform b may interact with lim-9 (via LIM zinc-binding domain). Isoform a and isoform b may interact (via FCP1 homology domain) with unc-89 (via fibronectin type-III domain 1, Ig-like C2-type domain 48/49 and protein kinase domain 1 or Ig-like C2-type domain 50, fibronectin type-III domain 2 and protein kinase domain 2); the interaction may act as a molecular bridge to bring two unc-89 molecules together or to stabilize a loop between the 2 protein kinase domains. It depends on Mg(2+) as a cofactor. As to expression, expressed in pharyngeal, vulval and body wall muscles.

Its subcellular location is the cytoplasm. It is found in the myofibril. It localises to the sarcomere. The protein resides in the m line. The enzyme catalyses O-phospho-L-seryl-[protein] + H2O = L-seryl-[protein] + phosphate. The catalysed reaction is O-phospho-L-threonyl-[protein] + H2O = L-threonyl-[protein] + phosphate. Its activity is regulated as follows. Inhibited by beryllium trifluoride (BeF(3-)) and tetrafluoroaluminate (AlF(4-)) but not by sodium fluoride (NaF) or sodium orthovanadate (Na3VO4). Functionally, phosphatase which may play a role in the egg laying muscles. The protein is CTD small phosphatase-like protein 1 of Caenorhabditis elegans.